A 235-amino-acid chain; its full sequence is RNA pyrophosphohydrolase (235 aa).

In terms of domain architecture, Nudix hydrolase spans 6-149 (GFRPNVGIIL…KRGVYEMALT (144 aa)). Residues 38 to 59 (GGIDRGENPEQAMFRELHEEVG) carry the Nudix box motif. The interval 184 to 235 (ANQSGEPGSFPAAGGIPSYATRPGAPFELPPGATFEPDPQTSFGVNAPTKKT) is disordered.

Belongs to the Nudix hydrolase family. RppH subfamily. A divalent metal cation serves as cofactor.

Functionally, accelerates the degradation of transcripts by removing pyrophosphate from the 5'-end of triphosphorylated RNA, leading to a more labile monophosphorylated state that can stimulate subsequent ribonuclease cleavage. The polypeptide is RNA pyrophosphohydrolase (Polaromonas naphthalenivorans (strain CJ2)).